The following is a 241-amino-acid chain: Phosphoglycolate phosphatase (241 aa).

Aspartate 8 functions as the Nucleophile in the catalytic mechanism. The Mg(2+) site is built by aspartate 8, aspartate 10, and aspartate 174.

This sequence belongs to the HAD-like hydrolase superfamily. CbbY/CbbZ/Gph/YieH family. Mg(2+) serves as cofactor.

It carries out the reaction 2-phosphoglycolate + H2O = glycolate + phosphate. Its pathway is organic acid metabolism; glycolate biosynthesis; glycolate from 2-phosphoglycolate: step 1/1. Functionally, specifically catalyzes the dephosphorylation of 2-phosphoglycolate. Is involved in the dissimilation of the intracellular 2-phosphoglycolate formed during the DNA repair of 3'-phosphoglycolate ends, a major class of DNA lesions induced by oxidative stress. The sequence is that of Phosphoglycolate phosphatase from Rhodospirillum rubrum (strain ATCC 11170 / ATH 1.1.1 / DSM 467 / LMG 4362 / NCIMB 8255 / S1).